A 323-amino-acid polypeptide reads, in one-letter code: Small ribosomal subunit protein uS2 (323 aa).

Residues 295–323 (VVNRDRAGFNKKQPKAEEAAKPAEKKAEK) form a disordered region.

It belongs to the universal ribosomal protein uS2 family.

The polypeptide is Small ribosomal subunit protein uS2 (Mycoplasmoides gallisepticum (strain R(low / passage 15 / clone 2)) (Mycoplasma gallisepticum)).